Consider the following 348-residue polypeptide: Probable dual-specificity RNA methyltransferase RlmN (348 aa).

Glu95 serves as the catalytic Proton acceptor. In terms of domain architecture, Radical SAM core spans 101 to 335; that stretch reads SGNRLTICVS…VSLRASRGLD (235 aa). Cys108 and Cys340 are disulfide-bonded. Positions 115, 119, and 122 each coordinate [4Fe-4S] cluster. S-adenosyl-L-methionine contacts are provided by residues 162–163, Ser192, 221–223, and Asn297; these read GE and SLH. Cys340 functions as the S-methylcysteine intermediate in the catalytic mechanism.

It belongs to the radical SAM superfamily. RlmN family. [4Fe-4S] cluster is required as a cofactor.

It localises to the cytoplasm. It carries out the reaction adenosine(2503) in 23S rRNA + 2 reduced [2Fe-2S]-[ferredoxin] + 2 S-adenosyl-L-methionine = 2-methyladenosine(2503) in 23S rRNA + 5'-deoxyadenosine + L-methionine + 2 oxidized [2Fe-2S]-[ferredoxin] + S-adenosyl-L-homocysteine. The catalysed reaction is adenosine(37) in tRNA + 2 reduced [2Fe-2S]-[ferredoxin] + 2 S-adenosyl-L-methionine = 2-methyladenosine(37) in tRNA + 5'-deoxyadenosine + L-methionine + 2 oxidized [2Fe-2S]-[ferredoxin] + S-adenosyl-L-homocysteine. Functionally, specifically methylates position 2 of adenine 2503 in 23S rRNA and position 2 of adenine 37 in tRNAs. This is Probable dual-specificity RNA methyltransferase RlmN from Prochlorococcus marinus (strain SARG / CCMP1375 / SS120).